The primary structure comprises 553 residues: Dihydroxy-acid dehydratase (553 aa).

Position 78 (Asp-78) interacts with Mg(2+). Cys-119 is a binding site for [2Fe-2S] cluster. 2 residues coordinate Mg(2+): Asp-120 and Lys-121. Lys-121 carries the N6-carboxylysine modification. Cys-193 contacts [2Fe-2S] cluster. Residue Glu-441 coordinates Mg(2+). Ser-467 functions as the Proton acceptor in the catalytic mechanism.

It belongs to the IlvD/Edd family. Homodimer. It depends on [2Fe-2S] cluster as a cofactor. Mg(2+) is required as a cofactor.

The enzyme catalyses (2R)-2,3-dihydroxy-3-methylbutanoate = 3-methyl-2-oxobutanoate + H2O. The catalysed reaction is (2R,3R)-2,3-dihydroxy-3-methylpentanoate = (S)-3-methyl-2-oxopentanoate + H2O. It participates in amino-acid biosynthesis; L-isoleucine biosynthesis; L-isoleucine from 2-oxobutanoate: step 3/4. It functions in the pathway amino-acid biosynthesis; L-valine biosynthesis; L-valine from pyruvate: step 3/4. Its function is as follows. Functions in the biosynthesis of branched-chain amino acids. Catalyzes the dehydration of (2R,3R)-2,3-dihydroxy-3-methylpentanoate (2,3-dihydroxy-3-methylvalerate) into 2-oxo-3-methylpentanoate (2-oxo-3-methylvalerate) and of (2R)-2,3-dihydroxy-3-methylbutanoate (2,3-dihydroxyisovalerate) into 2-oxo-3-methylbutanoate (2-oxoisovalerate), the penultimate precursor to L-isoleucine and L-valine, respectively. The protein is Dihydroxy-acid dehydratase of Pelobacter propionicus (strain DSM 2379 / NBRC 103807 / OttBd1).